The primary structure comprises 156 residues: Small ribosomal subunit protein uS7 (156 aa).

It belongs to the universal ribosomal protein uS7 family. Part of the 30S ribosomal subunit. Contacts proteins S9 and S11.

Its function is as follows. One of the primary rRNA binding proteins, it binds directly to 16S rRNA where it nucleates assembly of the head domain of the 30S subunit. Is located at the subunit interface close to the decoding center, probably blocks exit of the E-site tRNA. The chain is Small ribosomal subunit protein uS7 from Bacillus cytotoxicus (strain DSM 22905 / CIP 110041 / 391-98 / NVH 391-98).